Here is a 190-residue protein sequence, read N- to C-terminus: Crossover junction endodeoxyribonuclease RuvC (190 aa).

Active-site residues include Asp-8, Glu-67, and Asp-139. The Mg(2+) site is built by Asp-8, Glu-67, and Asp-139.

The protein belongs to the RuvC family. Homodimer which binds Holliday junction (HJ) DNA. The HJ becomes 2-fold symmetrical on binding to RuvC with unstacked arms; it has a different conformation from HJ DNA in complex with RuvA. In the full resolvosome a probable DNA-RuvA(4)-RuvB(12)-RuvC(2) complex forms which resolves the HJ. Requires Mg(2+) as cofactor.

The protein resides in the cytoplasm. It carries out the reaction Endonucleolytic cleavage at a junction such as a reciprocal single-stranded crossover between two homologous DNA duplexes (Holliday junction).. Its function is as follows. The RuvA-RuvB-RuvC complex processes Holliday junction (HJ) DNA during genetic recombination and DNA repair. Endonuclease that resolves HJ intermediates. Cleaves cruciform DNA by making single-stranded nicks across the HJ at symmetrical positions within the homologous arms, yielding a 5'-phosphate and a 3'-hydroxyl group; requires a central core of homology in the junction. The consensus cleavage sequence is 5'-(A/T)TT(C/G)-3'. Cleavage occurs on the 3'-side of the TT dinucleotide at the point of strand exchange. HJ branch migration catalyzed by RuvA-RuvB allows RuvC to scan DNA until it finds its consensus sequence, where it cleaves and resolves the cruciform DNA. This chain is Crossover junction endodeoxyribonuclease RuvC, found in Haemophilus influenzae (strain 86-028NP).